The chain runs to 170 residues: Ribosome maturation factor RimM (170 aa).

The PRC barrel domain occupies 97–170 (KPDEYYWVDL…LVVVDWDPEF (74 aa)).

It belongs to the RimM family. As to quaternary structure, binds ribosomal protein uS19.

It localises to the cytoplasm. Functionally, an accessory protein needed during the final step in the assembly of 30S ribosomal subunit, possibly for assembly of the head region. Essential for efficient processing of 16S rRNA. May be needed both before and after RbfA during the maturation of 16S rRNA. It has affinity for free ribosomal 30S subunits but not for 70S ribosomes. The sequence is that of Ribosome maturation factor RimM from Stenotrophomonas maltophilia (strain K279a).